Reading from the N-terminus, the 119-residue chain is uncharacterized protein (119 aa).

Residues 1 to 26 form the signal peptide; the sequence is MNKLKRLSMLTVMIASVFIFSSHALA. Positions 30–104 constitute an SH3b domain; that stretch reads YTVSTSSGAP…IVPGFVSDTY (75 aa).

This sequence to B.subtilis YraJ.

This is an uncharacterized protein from Bacillus subtilis (strain 168).